The following is a 189-amino-acid chain: Threonylcarbamoyl-AMP synthase (189 aa).

One can recognise a YrdC-like domain in the interval alanine 9–arginine 189.

Belongs to the SUA5 family. TsaC subfamily.

The protein resides in the cytoplasm. It catalyses the reaction L-threonine + hydrogencarbonate + ATP = L-threonylcarbamoyladenylate + diphosphate + H2O. Functionally, required for the formation of a threonylcarbamoyl group on adenosine at position 37 (t(6)A37) in tRNAs that read codons beginning with adenine. Catalyzes the conversion of L-threonine, HCO(3)(-)/CO(2) and ATP to give threonylcarbamoyl-AMP (TC-AMP) as the acyladenylate intermediate, with the release of diphosphate. This Neisseria meningitidis serogroup C (strain 053442) protein is Threonylcarbamoyl-AMP synthase.